The sequence spans 488 residues: Beta-xylosidase (488 aa).

The Proton donor role is filled by E163. The active-site Nucleophile is the E275.

It belongs to the glycosyl hydrolase 39 family.

It catalyses the reaction Hydrolysis of (1-&gt;4)-beta-D-xylans, to remove successive D-xylose residues from the non-reducing termini.. Beta-xylosidase is an intracellular xylan-degrading enzyme. The sequence is that of Beta-xylosidase (xynB) from Caldicellulosiruptor saccharolyticus (Caldocellum saccharolyticum).